Here is a 319-residue protein sequence, read N- to C-terminus: Acetyl esterase (319 aa).

The Involved in the stabilization of the negatively charged intermediate by the formation of the oxyanion hole signature appears at 91-93 (HGG). Active-site residues include Ser-165, Asp-262, and His-292.

It belongs to the 'GDXG' lipolytic enzyme family. As to quaternary structure, homodimer. Interacts with MalT and MelA.

It localises to the cytoplasm. Functionally, displays esterase activity towards short chain fatty esters (acyl chain length of up to 8 carbons). Able to hydrolyze triacetylglycerol (triacetin) and tributyrylglycerol (tributyrin), but not trioleylglycerol (triolein) or cholesterol oleate. Negatively regulates MalT activity by antagonizing maltotriose binding. Inhibits MelA galactosidase activity. This chain is Acetyl esterase, found in Shigella boydii serotype 4 (strain Sb227).